A 118-amino-acid chain; its full sequence is UPF0102 protein lpp3065 (118 aa).

It belongs to the UPF0102 family.

The sequence is that of UPF0102 protein lpp3065 from Legionella pneumophila (strain Paris).